A 126-amino-acid polypeptide reads, in one-letter code: Holo-[acyl-carrier-protein] synthase (126 aa).

Mg(2+)-binding residues include Asp-8 and Glu-50.

Belongs to the P-Pant transferase superfamily. AcpS family. Mg(2+) serves as cofactor.

Its subcellular location is the cytoplasm. It catalyses the reaction apo-[ACP] + CoA = holo-[ACP] + adenosine 3',5'-bisphosphate + H(+). Functionally, transfers the 4'-phosphopantetheine moiety from coenzyme A to a Ser of acyl-carrier-protein. This chain is Holo-[acyl-carrier-protein] synthase, found in Micrococcus luteus (strain ATCC 4698 / DSM 20030 / JCM 1464 / CCM 169 / CCUG 5858 / IAM 1056 / NBRC 3333 / NCIMB 9278 / NCTC 2665 / VKM Ac-2230) (Micrococcus lysodeikticus).